The following is a 261-amino-acid chain: Zinc finger protein 664 (261 aa).

C2H2-type zinc fingers lie at residues 3 to 25, 31 to 53, 59 to 81, 87 to 109, 115 to 137, 143 to 165, 171 to 193, 199 to 221, and 227 to 249; these read YKCP…QKIH, HKCD…WRDH, YKCD…KKIH, YKCY…MRVH, YVCS…QRVH, FKCE…QRVH, YKCY…QRVH, YRCC…QRVH, and FKCD…QRVH. A Glycyl lysine isopeptide (Lys-Gly) (interchain with G-Cter in SUMO2) cross-link involves residue lysine 257.

It belongs to the krueppel C2H2-type zinc-finger protein family.

The protein resides in the nucleus. Functionally, may be involved in transcriptional regulation. The chain is Zinc finger protein 664 (Znf664) from Mus musculus (Mouse).